The following is a 359-amino-acid chain: Protein mab-21-like 2 (359 aa).

It belongs to the mab-21 family. As to expression, expressed in the adult cerebellum and eye, with lower levels in the adult forebrain. In embryos at 10.5 days post-coitum strongly expressed in the rostral and distal regions of the developing neural retina, with no expression immediately adjacent to the closing optic fissure. Expression is also observed in the dorsal and ventral aspects of the developing forelimb bud and in the developing pharyngeal arches, as well as in the midbrain.

The protein localises to the nucleus. Its subcellular location is the cytoplasm. Required for several aspects of embryonic development including normal development of the eye, notochord, neural tube and other organ tissues, and for embryonic turning. The chain is Protein mab-21-like 2 (Mab21l2) from Mus musculus (Mouse).